Consider the following 374-residue polypeptide: Alcohol dehydrogenase class-3 (374 aa).

At Ala-2 the chain carries N-acetylalanine. Cys-45, His-67, Cys-97, Cys-100, Cys-103, Cys-111, and Cys-174 together coordinate Zn(2+). Lys-233 bears the N6-succinyllysine mark. The residue at position 247 (Ser-247) is a Phosphoserine. Lys-315 is subject to N6-succinyllysine. At Ser-324 the chain carries Phosphoserine.

It belongs to the zinc-containing alcohol dehydrogenase family. Class-III subfamily. In terms of assembly, homodimer. Zn(2+) serves as cofactor.

It localises to the cytoplasm. It catalyses the reaction a primary alcohol + NAD(+) = an aldehyde + NADH + H(+). The catalysed reaction is a secondary alcohol + NAD(+) = a ketone + NADH + H(+). The enzyme catalyses S-(hydroxymethyl)glutathione + NADP(+) = S-formylglutathione + NADPH + H(+). It carries out the reaction S-(hydroxymethyl)glutathione + NAD(+) = S-formylglutathione + NADH + H(+). It catalyses the reaction 20-oxo-(5Z,8Z,11Z,14Z)-eicosatetraenoate + NAD(+) + H2O = (5Z,8Z,11Z,14Z)-eicosatetraenedioate + NADH + 2 H(+). The catalysed reaction is 20-hydroxy-(5Z,8Z,11Z,14Z)-eicosatetraenoate + NAD(+) = 20-oxo-(5Z,8Z,11Z,14Z)-eicosatetraenoate + NADH + H(+). The enzyme catalyses S-nitrosoglutathione + NADH + H(+) = S-(hydroxysulfenamide)glutathione + NAD(+). In terms of biological role, catalyzes the oxidation of long-chain primary alcohols and the oxidation of S-(hydroxymethyl) glutathione. Also oxidizes long chain omega-hydroxy fatty acids, such as 20-HETE, producing both the intermediate aldehyde, 20-oxoarachidonate and the end product, a dicarboxylic acid, (5Z,8Z,11Z,14Z)-eicosatetraenedioate. Class-III ADH is remarkably ineffective in oxidizing ethanol. Required for clearance of cellular formaldehyde, a cytotoxic and carcinogenic metabolite that induces DNA damage. Also acts as a S-nitroso-glutathione reductase by catalyzing the NADH-dependent reduction of S-nitrosoglutathione, thereby regulating protein S-nitrosylation. The sequence is that of Alcohol dehydrogenase class-3 from Bos taurus (Bovine).